The chain runs to 305 residues: UDP-3-O-acyl-N-acetylglucosamine deacetylase (305 aa).

Zn(2+) is bound by residues H79, H238, and D242. Residue H265 is the Proton donor of the active site.

The protein belongs to the LpxC family. Zn(2+) serves as cofactor.

It carries out the reaction a UDP-3-O-[(3R)-3-hydroxyacyl]-N-acetyl-alpha-D-glucosamine + H2O = a UDP-3-O-[(3R)-3-hydroxyacyl]-alpha-D-glucosamine + acetate. The protein operates within glycolipid biosynthesis; lipid IV(A) biosynthesis; lipid IV(A) from (3R)-3-hydroxytetradecanoyl-[acyl-carrier-protein] and UDP-N-acetyl-alpha-D-glucosamine: step 2/6. Its function is as follows. Catalyzes the hydrolysis of UDP-3-O-myristoyl-N-acetylglucosamine to form UDP-3-O-myristoylglucosamine and acetate, the committed step in lipid A biosynthesis. In Vibrio parahaemolyticus serotype O3:K6 (strain RIMD 2210633), this protein is UDP-3-O-acyl-N-acetylglucosamine deacetylase.